We begin with the raw amino-acid sequence, 67 residues long: Ayadualin (67 aa).

A signal peptide spans 1–20; that stretch reads MNKIILFSAVFLALVFCAEA. Over residues 35-54 the composition is skewed to acidic residues; sequence PDDTVDIDEGLPDAFDEDYE. The interval 35–67 is disordered; it reads PDDTVDIDEGLPDAFDEDYEQDGHNPYPCRGDC. The short motif at 64–66 is the Integrin-binding motif element; sequence RGD.

Salivary gland.

The protein localises to the secreted. Functionally, inhibits collagen- and ADP-induced host platelet aggregation by blocking the binding of host integrin alpha-IIb/beta-3 (ITGA2B/ITGB3) to fibrinogen. Inhibits the intrinsic blood coagulation pathway in the host by blocking the activity of host coagulation factor XIIa (F12). The polypeptide is Ayadualin (Lutzomyia ayacuchensis (Sand fly)).